The chain runs to 350 residues: tRNA uridine(34) hydroxylase (350 aa).

One can recognise a Rhodanese domain in the interval 146–240; the sequence is DDPDALFIDM…YARKAREQGL (95 aa). The active-site Cysteine persulfide intermediate is Cys200.

This sequence belongs to the TrhO family.

It carries out the reaction uridine(34) in tRNA + AH2 + O2 = 5-hydroxyuridine(34) in tRNA + A + H2O. In terms of biological role, catalyzes oxygen-dependent 5-hydroxyuridine (ho5U) modification at position 34 in tRNAs. This is tRNA uridine(34) hydroxylase from Shigella dysenteriae serotype 1 (strain Sd197).